A 457-amino-acid chain; its full sequence is Bifunctional protein GlmU (457 aa).

The pyrophosphorylase stretch occupies residues 1–228; it reads MEGLVTLILA…SEEITGVNSR (228 aa). UDP-N-acetyl-alpha-D-glucosamine contacts are provided by residues 9–12, Lys-23, Gln-73, and 78–79; these read LAAG and GT. Position 102 (Asp-102) interacts with Mg(2+). UDP-N-acetyl-alpha-D-glucosamine contacts are provided by Gly-139, Glu-154, Asn-169, and Asn-226. Position 226 (Asn-226) interacts with Mg(2+). Residues 229 to 249 form a linker region; that stretch reads VQLFEAEKIMRKRINYRHMEN. The segment at 250-457 is N-acetyltransferase; the sequence is GVTIVDPDTT…VQERIKKGRL (208 aa). 2 residues coordinate UDP-N-acetyl-alpha-D-glucosamine: Arg-331 and Lys-349. Catalysis depends on His-361, which acts as the Proton acceptor. Positions 364 and 375 each coordinate UDP-N-acetyl-alpha-D-glucosamine. Acetyl-CoA is bound by residues 384–385, Ala-421, and Arg-438; that span reads NY.

It in the N-terminal section; belongs to the N-acetylglucosamine-1-phosphate uridyltransferase family. This sequence in the C-terminal section; belongs to the transferase hexapeptide repeat family. In terms of assembly, homotrimer. It depends on Mg(2+) as a cofactor.

The protein resides in the cytoplasm. It carries out the reaction alpha-D-glucosamine 1-phosphate + acetyl-CoA = N-acetyl-alpha-D-glucosamine 1-phosphate + CoA + H(+). The enzyme catalyses N-acetyl-alpha-D-glucosamine 1-phosphate + UTP + H(+) = UDP-N-acetyl-alpha-D-glucosamine + diphosphate. It functions in the pathway nucleotide-sugar biosynthesis; UDP-N-acetyl-alpha-D-glucosamine biosynthesis; N-acetyl-alpha-D-glucosamine 1-phosphate from alpha-D-glucosamine 6-phosphate (route II): step 2/2. Its pathway is nucleotide-sugar biosynthesis; UDP-N-acetyl-alpha-D-glucosamine biosynthesis; UDP-N-acetyl-alpha-D-glucosamine from N-acetyl-alpha-D-glucosamine 1-phosphate: step 1/1. It participates in bacterial outer membrane biogenesis; LPS lipid A biosynthesis. Its function is as follows. Catalyzes the last two sequential reactions in the de novo biosynthetic pathway for UDP-N-acetylglucosamine (UDP-GlcNAc). The C-terminal domain catalyzes the transfer of acetyl group from acetyl coenzyme A to glucosamine-1-phosphate (GlcN-1-P) to produce N-acetylglucosamine-1-phosphate (GlcNAc-1-P), which is converted into UDP-GlcNAc by the transfer of uridine 5-monophosphate (from uridine 5-triphosphate), a reaction catalyzed by the N-terminal domain. In Thermoanaerobacter pseudethanolicus (strain ATCC 33223 / 39E) (Clostridium thermohydrosulfuricum), this protein is Bifunctional protein GlmU.